We begin with the raw amino-acid sequence, 215 residues long: Sodium channel regulatory subunit beta-3 (215 aa).

The signal sequence occupies residues 1–22 (MPAFNRLFPLVSLVLIYWASVC). Residues 23 to 156 (FPVCVEVPSE…EEAGEDFTSV (134 aa)) are Extracellular-facing. Positions 24–138 (PVCVEVPSET…EAHRPFVKTT (115 aa)) constitute an Ig-like C2-type domain. 2 cysteine pairs are disulfide-bonded: Cys26/Cys48 and Cys45/Cys120. Residues Asn95, Asn109, Asn113, and Asn121 are each glycosylated (N-linked (GlcNAc...) asparagine). Residues 157 to 178 (VSEIMMYILLVFLTLWLLIEMI) form a helical membrane-spanning segment. The Cytoplasmic segment spans residues 179-215 (YCYRKVSKAEEAAQENASDYLAIPSENKENSAVPVEE).

The protein belongs to the sodium channel auxiliary subunit SCN3B (TC 8.A.17) family. As to quaternary structure, a voltage-gated sodium (Nav) channel consists of an ion-conducting pore-forming alpha subunit functional on its own that is regulated by one or more beta subunits. Forms homodimers and homotrimers. SCN3B is non-covalently associated with alpha subunits and induces the formation of alpha subunit oligomers, including trimers. Interacts with SCN5A/Nav1.5; regulatory subunit of SCN5A/Nav1.5. Interacts with SCN7A/Nav2.1; probable regulatory subunit of SCN7A/Nav2.1. Interacts with SCN10A; regulatory subunit of SCN10A/Nav1.8. Interacts with NFASC; probably involved in targeting the sodium channels to the nodes of Ranvier. In terms of processing, intramolecular disulfide bonds favor the voltage-gated sodium channel oligomeric complex assembly. Post-translationally, N-glycosylated.

The protein resides in the cell membrane. Its function is as follows. Regulatory subunit of multiple voltage-gated sodium (Nav) channels directly mediating the depolarization of excitable membranes. Navs, also called VGSCs (voltage-gated sodium channels) or VDSCs (voltage-dependent sodium channels), operate by switching between closed and open conformations depending on the voltage difference across the membrane. In the open conformation they allow Na(+) ions to selectively pass through the pore, along their electrochemical gradient. The influx of Na+ ions provokes membrane depolarization, initiating the propagation of electrical signals throughout cells and tissues. The accessory beta subunits participate in localization and functional modulation of the Nav channels. Modulates the activity of SCN2A/Nav1.2, causing a hyperpolarizing shift in the voltage-dependence of inactivation of the channel and increasing the fraction of channels operating in the fast gating mode. Modulates the activity of SCN5A/Nav1.5. Could also regulate the atypical sodium channel SCN7A/Nav2.1. Modulates the activity of SCN10A/Nav1.8, regulating its oligomerization and accelerating the recovery from inactivation. This Macaca fascicularis (Crab-eating macaque) protein is Sodium channel regulatory subunit beta-3.